The chain runs to 423 residues: Maintenance of mitochondrial morphology protein 1 (423 aa).

The Lumenal segment spans residues 1-15 (MWLDDVASELSFTQG). Residues 16–36 (LLLGQLSIVILIGAFIKFFIF) form a helical membrane-spanning segment. The Cytoplasmic portion of the chain corresponds to 37-423 (GDPPSPDVSA…PGSMPGLSMA (387 aa)). The SMP-LTD domain maps to 110 to 322 (QPESLDWFNV…EPRFQQIELP (213 aa)). Disordered stretches follow at residues 327–370 (RKKN…EAET) and 394–423 (SEEG…LSMA). Over residues 350 to 367 (RSRDVERDLREEARKEVE) the composition is skewed to basic and acidic residues.

The protein belongs to the MMM1 family. Homodimer. Component of the ER-mitochondria encounter structure (ERMES) or MDM complex, composed of mmm1, mdm10, mdm12 and mdm34. A mmm1 homodimer associates with one molecule of mdm12 on each side in a pairwise head-to-tail manner, and the SMP-LTD domains of mmm1 and mdm12 generate a continuous hydrophobic tunnel for phospholipid trafficking.

The protein resides in the endoplasmic reticulum membrane. Component of the ERMES/MDM complex, which serves as a molecular tether to connect the endoplasmic reticulum (ER) and mitochondria. Components of this complex are involved in the control of mitochondrial shape and protein biogenesis, and function in nonvesicular lipid trafficking between the ER and mitochondria. The mdm12-mmm1 subcomplex functions in the major beta-barrel assembly pathway that is responsible for biogenesis of all outer membrane beta-barrel proteins, and acts in a late step after the SAM complex. The mdm10-mdm12-mmm1 subcomplex further acts in the TOM40-specific pathway after the action of the mdm12-mmm1 complex. Essential for establishing and maintaining the structure of mitochondria and maintenance of mtDNA nucleoids. This Sclerotinia sclerotiorum (strain ATCC 18683 / 1980 / Ss-1) (White mold) protein is Maintenance of mitochondrial morphology protein 1.